The sequence spans 1105 residues: Integrator complex subunit 2 (1105 aa).

The helical transmembrane segment at 822-842 (FVFCSPYLLMILLRILKGSLA) threads the bilayer.

The protein belongs to the Integrator subunit 2 family. As to quaternary structure, belongs to the multiprotein complex Integrator, at least composed of IntS1, IntS2, IntS3, IntS4, omd/IntS5, IntS6, defl/IntS7, IntS8, IntS9, IntS10, IntS11, IntS12, asun/IntS13, IntS14 and IntS15. The core complex associates with protein phosphatase 2A subunits mts/PP2A and Pp2A-29B, to form the Integrator-PP2A (INTAC) complex.

The protein localises to the nucleus membrane. The protein resides in the nucleus. Its function is as follows. Component of the integrator complex, a multiprotein complex that terminates RNA polymerase II (Pol II) transcription in the promoter-proximal region of genes. The integrator complex provides a quality checkpoint during transcription elongation by driving premature transcription termination of transcripts that are unfavorably configured for transcriptional elongation: the complex terminates transcription by (1) catalyzing dephosphorylation of the C-terminal domain (CTD) of Pol II subunit Polr2A/Rbp1 and Spt5, and (2) degrading the exiting nascent RNA transcript via endonuclease activity. The integrator complex is also involved in the 3'-end processing of the U7 snRNA, and also the spliceosomal snRNAs U1, U2, U4 and U5. This chain is Integrator complex subunit 2, found in Drosophila melanogaster (Fruit fly).